The primary structure comprises 810 residues: Transducer protein CosT (810 aa).

Residues 1 to 38 (MSEPTADAGDNSPSSTDTAPLDRVKAIALLPLRSYLVK) lie on the Cytoplasmic side of the membrane. Residues 39-59 (FAVALLVILVIIAAGGFWVQA) traverse the membrane as a helical segment. Over 60–323 (DATATLEANT…AFALSNQIRT (264 aa)) the chain is Extracellular. A helical transmembrane segment spans residues 324–344 (GILGFILVALVGVVLVGGTIG). Residues 345 to 397 (RNTAAAVQSLSAAAAEIEAGNYDVDVASSRRDEIGQLFASIGSMRDALVTQID) form the HAMP 1 domain. Residues 345 to 810 (RNTAAAVQSL…DRDVTPTQTD (466 aa)) are Cytoplasmic-facing. The interval 403–427 (REQATEAQQDAEAERERAEDARERA) is disordered. Positions 414-427 (EAERERAEDARERA) are enriched in basic and acidic residues. An HAMP 2 domain is found at 439-493 (AELEAQAERYSDVMAACADGDLTRRMPADDTDNEAMAAIAASFNEMLAQWEHTII). The Methyl-accepting transducer domain maps to 512-748 (GAADAERASG…EAVSMTEEVA (237 aa)). Residues glutamate 556 and glutamate 739 each carry the glutamate methyl ester (Glu) modification. Residues 751 to 784 (SDSTAGEAQSVSAAAEEQAASMSEISDSVESLSG) are disordered. Over residues 755-774 (AGEAQSVSAAAEEQAASMSE) the composition is skewed to low complexity. The segment covering 775–784 (ISDSVESLSG) has biased composition (polar residues).

The protein belongs to the methyl-accepting chemotaxis (MCP) protein family. Post-translationally, methylated by CheR.

It is found in the cell membrane. Functionally, mediates chemotaxis towards compatible osmolytes. Probably transduces the signal from the substrate-binding protein CosB to the histidine kinase CheA. The chain is Transducer protein CosT (cosT) from Halobacterium salinarum (strain ATCC 700922 / JCM 11081 / NRC-1) (Halobacterium halobium).